The primary structure comprises 130 residues: UPF0251 protein MmarC5_0986 (130 aa).

Belongs to the UPF0251 family.

This chain is UPF0251 protein MmarC5_0986, found in Methanococcus maripaludis (strain C5 / ATCC BAA-1333).